A 336-amino-acid chain; its full sequence is tRNA N6-adenosine threonylcarbamoyltransferase (336 aa).

Residues His-114 and His-118 each contribute to the Fe cation site. Residues 136-140 (LVSGG), Asp-169, Gly-182, Asp-186, and Asn-275 each bind substrate. Asp-301 contacts Fe cation.

This sequence belongs to the KAE1 / TsaD family. It depends on Fe(2+) as a cofactor.

Its subcellular location is the cytoplasm. The enzyme catalyses L-threonylcarbamoyladenylate + adenosine(37) in tRNA = N(6)-L-threonylcarbamoyladenosine(37) in tRNA + AMP + H(+). Functionally, required for the formation of a threonylcarbamoyl group on adenosine at position 37 (t(6)A37) in tRNAs that read codons beginning with adenine. Is involved in the transfer of the threonylcarbamoyl moiety of threonylcarbamoyl-AMP (TC-AMP) to the N6 group of A37, together with TsaE and TsaB. TsaD likely plays a direct catalytic role in this reaction. The sequence is that of tRNA N6-adenosine threonylcarbamoyltransferase from Streptococcus pneumoniae (strain ATCC 700669 / Spain 23F-1).